Consider the following 123-residue polypeptide: Ribosome-binding factor A (123 aa).

Belongs to the RbfA family. As to quaternary structure, monomer. Binds 30S ribosomal subunits, but not 50S ribosomal subunits or 70S ribosomes.

It localises to the cytoplasm. Functionally, one of several proteins that assist in the late maturation steps of the functional core of the 30S ribosomal subunit. Associates with free 30S ribosomal subunits (but not with 30S subunits that are part of 70S ribosomes or polysomes). Required for efficient processing of 16S rRNA. May interact with the 5'-terminal helix region of 16S rRNA. In Neisseria meningitidis serogroup A / serotype 4A (strain DSM 15465 / Z2491), this protein is Ribosome-binding factor A.